A 456-amino-acid chain; its full sequence is Signal recognition particle receptor FtsY (456 aa).

Residues 1–26 (MFDGLKKKLNRFRNDVEETAEEKAEA) show a composition bias toward basic and acidic residues. Residues 1–163 (MFDGLKKKLN…DEDDSSGPGR (163 aa)) are disordered. Acidic residues predominate over residues 27 to 39 (AADEAESDADAEA). Residues 40 to 62 (ESAPADTDNAAVEPEASEPAAAD) show a composition bias toward low complexity. Acidic residues predominate over residues 63–81 (PDADAVGDADAGSEADAVD). A compositionally biased stretch (low complexity) spans 82 to 97 (AADAPADAESSSAAVE). Residues 112-134 (PDSEVDAGADTGDEPSGEPTADE) are compositionally biased toward acidic residues. Residues 265-272 (GINGVGKT), 347-351 (DTAGR), and 405-408 (TKAD) each bind GTP.

This sequence belongs to the GTP-binding SRP family. FtsY subfamily. Part of the signal recognition particle protein translocation system, which is composed of SRP and FtsY.

Its subcellular location is the cell membrane. The protein localises to the cytoplasm. It carries out the reaction GTP + H2O = GDP + phosphate + H(+). In terms of biological role, involved in targeting and insertion of nascent membrane proteins into the cytoplasmic membrane. Acts as a receptor for the complex formed by the signal recognition particle (SRP) and the ribosome-nascent chain (RNC). This is Signal recognition particle receptor FtsY from Haloferax volcanii (strain ATCC 29605 / DSM 3757 / JCM 8879 / NBRC 14742 / NCIMB 2012 / VKM B-1768 / DS2) (Halobacterium volcanii).